A 203-amino-acid chain; its full sequence is Large ribosomal subunit protein bL25 (203 aa).

Belongs to the bacterial ribosomal protein bL25 family. CTC subfamily. Part of the 50S ribosomal subunit; part of the 5S rRNA/L5/L18/L25 subcomplex. Contacts the 5S rRNA. Binds to the 5S rRNA independently of L5 and L18.

Its function is as follows. This is one of the proteins that binds to the 5S RNA in the ribosome where it forms part of the central protuberance. The chain is Large ribosomal subunit protein bL25 from Cereibacter sphaeroides (strain ATCC 17025 / ATH 2.4.3) (Rhodobacter sphaeroides).